A 238-amino-acid chain; its full sequence is Putative ABC transporter ATP-binding protein AF_1841 (238 aa).

Residues 8-238 (IEADSVSYDY…EELLEKAGVI (231 aa)) enclose the ABC transporter domain. 41–48 (GANGSGKS) is an ATP binding site.

It belongs to the ABC transporter superfamily.

It localises to the cell membrane. Functionally, probably part of an ABC transporter complex. Responsible for energy coupling to the transport system. This Archaeoglobus fulgidus (strain ATCC 49558 / DSM 4304 / JCM 9628 / NBRC 100126 / VC-16) protein is Putative ABC transporter ATP-binding protein AF_1841.